The sequence spans 362 residues: NAD(P)H-quinone oxidoreductase subunit 1, chloroplastic (362 aa).

8 helical membrane passes run 27–47 (IWIL…LVIV), 103–123 (IAVI…HFVL), 128–148 (IGVF…LMAG), 164–184 (AAQS…ISLL), 202–222 (FFGW…ISSL), 247–267 (YSGI…LVSS), 303–323 (VIGI…SITI), and 342–362 (FLLP…LVSL).

Belongs to the complex I subunit 1 family. In terms of assembly, NDH is composed of at least 16 different subunits, 5 of which are encoded in the nucleus.

Its subcellular location is the plastid. It localises to the chloroplast thylakoid membrane. It carries out the reaction a plastoquinone + NADH + (n+1) H(+)(in) = a plastoquinol + NAD(+) + n H(+)(out). The enzyme catalyses a plastoquinone + NADPH + (n+1) H(+)(in) = a plastoquinol + NADP(+) + n H(+)(out). Functionally, NDH shuttles electrons from NAD(P)H:plastoquinone, via FMN and iron-sulfur (Fe-S) centers, to quinones in the photosynthetic chain and possibly in a chloroplast respiratory chain. The immediate electron acceptor for the enzyme in this species is believed to be plastoquinone. Couples the redox reaction to proton translocation, and thus conserves the redox energy in a proton gradient. This is NAD(P)H-quinone oxidoreductase subunit 1, chloroplastic from Saccharum hybrid (Sugarcane).